The primary structure comprises 229 residues: DNA mismatch repair protein MutH (229 aa).

Belongs to the MutH family.

The protein resides in the cytoplasm. Its function is as follows. Sequence-specific endonuclease that cleaves unmethylated GATC sequences. It is involved in DNA mismatch repair. In Escherichia coli O6:K15:H31 (strain 536 / UPEC), this protein is DNA mismatch repair protein MutH.